The chain runs to 358 residues: MAATSAQHIGLQGHGTSRNDRDRRLVRYWLYAVFAVLIAIVMVGGATRMTGSGLSITEWKPIHGVIPPLNHAEWVEEFEKYQQIPQYQQINKGMSLAEFQYIFWWEWAHRLLARFVGFLVAVPLGFFWLTGRLKGGLKYRMLGLLALGGLQGAIGWWMVASGLSELTSVSQYRLAIHLTTACVIITAVFYIARGLVTYSERPAERSIQRFAGWIVFAVLVQIYLGGLVAGLHAGLTYNTWPLIDGAIIPSDLFTQAPWWRNLFENPKTVQFVHRMFAYTVLLLAILHAVQVWKNAPGTTHARRTIVLVGLVFIQAMIGIATLLMSAPLHLGLTHQFFALVVLAFAVAHWRATKGAYAA.

The next 8 helical transmembrane spans lie at 25-45, 111-131, 141-161, 176-196, 210-230, 269-289, 304-324, and 326-346; these read LVRY…MVGG, LLAR…WLTG, MLGL…MVAS, IHLT…RGLV, FAGW…LVAG, VQFV…LHAV, TIVL…TLLM, and APLH…AFAV. His-273 is a heme binding site. Residue His-334 participates in heme binding.

It belongs to the COX15/CtaA family. Type 2 subfamily. In terms of assembly, interacts with CtaB. Heme b serves as cofactor.

The protein resides in the cell membrane. It catalyses the reaction Fe(II)-heme o + 2 A + H2O = Fe(II)-heme a + 2 AH2. The protein operates within porphyrin-containing compound metabolism; heme A biosynthesis; heme A from heme O: step 1/1. Catalyzes the conversion of heme O to heme A by two successive hydroxylations of the methyl group at C8. The first hydroxylation forms heme I, the second hydroxylation results in an unstable dihydroxymethyl group, which spontaneously dehydrates, resulting in the formyl group of heme A. In Brucella suis (strain ATCC 23445 / NCTC 10510), this protein is Heme A synthase.